Here is a 116-residue protein sequence, read N- to C-terminus: Fluoride-specific ion channel FluC 1 (116 aa).

4 helical membrane-spanning segments follow: residues 2–22 (LVLVGLAGAGAAVGALSRYGI), 33–53 (PLPIATLFINLTGALLLGWIL), 63–83 (IFLGTGIMGGYTTFSTMINEL), and 96–116 (WEYFGLSLVGGLVMVYLGTLI). Glycine 71 and threonine 74 together coordinate Na(+).

It belongs to the fluoride channel Fluc/FEX (TC 1.A.43) family.

The protein localises to the cell membrane. It catalyses the reaction fluoride(in) = fluoride(out). With respect to regulation, na(+) is not transported, but it plays an essential structural role and its presence is essential for fluoride channel function. Functionally, fluoride-specific ion channel. Important for reducing fluoride concentration in the cell, thus reducing its toxicity. The chain is Fluoride-specific ion channel FluC 1 from Lactiplantibacillus plantarum (strain ATCC BAA-793 / NCIMB 8826 / WCFS1) (Lactobacillus plantarum).